Reading from the N-terminus, the 955-residue chain is 2-oxoglutarate dehydrogenase E1 component (955 aa).

Belongs to the alpha-ketoglutarate dehydrogenase family. As to quaternary structure, homodimer. Part of the 2-oxoglutarate dehydrogenase (OGDH) complex composed of E1 (2-oxoglutarate dehydrogenase), E2 (dihydrolipoamide succinyltransferase) and E3 (dihydrolipoamide dehydrogenase); the complex contains multiple copies of the three enzymatic components (E1, E2 and E3). Thiamine diphosphate serves as cofactor.

It carries out the reaction N(6)-[(R)-lipoyl]-L-lysyl-[protein] + 2-oxoglutarate + H(+) = N(6)-[(R)-S(8)-succinyldihydrolipoyl]-L-lysyl-[protein] + CO2. Functionally, E1 component of the 2-oxoglutarate dehydrogenase (OGDH) complex which catalyzes the decarboxylation of 2-oxoglutarate, the first step in the conversion of 2-oxoglutarate to succinyl-CoA and CO(2). The chain is 2-oxoglutarate dehydrogenase E1 component from Bacillus cereus (strain ZK / E33L).